The chain runs to 1235 residues: Receptor-type adenylate cyclase ESAG 4 (1235 aa).

Residues 1–20 (MNMLHLSDRNASLAPSGGEH) are disordered. The Cytoplasmic portion of the chain corresponds to 1–32 (MNMLHLSDRNASLAPSGGEHSLPTGGAVCRDA). Residues 33-53 (MDILPVILRAPVALLLLLVVL) form a helical membrane-spanning segment. At 54-858 (PQLSVGAEAN…SNAGRISGAS (805 aa)) the chain is on the extracellular side. Residues N63, N90, N97, N362, N531, N566, N705, and N830 are each glycosylated (N-linked (GlcNAc...) asparagine). The chain crosses the membrane as a helical span at residues 859-879 (LVGIIIGGALALFLVVALGVV). The Cytoplasmic segment spans residues 880–1235 (PYFFLRNTVI…VSSQVEERLL (356 aa)). The Guanylate cyclase domain maps to 900-1054 (TLIFTDIESS…RTSNMAARTE (155 aa)). Mg(2+)-binding residues include D905 and D948.

Belongs to the adenylyl cyclase class-3 family. Requires Mg(2+) as cofactor.

The protein resides in the membrane. It catalyses the reaction ATP = 3',5'-cyclic AMP + diphosphate. Its function is as follows. Could act as a receptor for an unknown ligand. The polypeptide is Receptor-type adenylate cyclase ESAG 4 (ESAG4) (Trypanosoma brucei brucei).